The following is a 201-amino-acid chain: Anthranilate synthase component 2 (201 aa).

Residues 3–196 enclose the Glutamine amidotransferase type-1 domain; the sequence is NILFIDNFDS…IDWALSSTPA (194 aa). L-glutamine is bound at residue 57-59; that stretch reads GPG. The active-site Nucleophile; for GATase activity is the C84. Residues Q88 and 134–135 contribute to the L-glutamine site; that span reads SL. Active-site for GATase activity residues include H170 and E172.

As to quaternary structure, heterotetramer consisting of two non-identical subunits: a beta subunit (TrpG) and a large alpha subunit (TrpE).

The enzyme catalyses chorismate + L-glutamine = anthranilate + pyruvate + L-glutamate + H(+). The protein operates within amino-acid biosynthesis; L-tryptophan biosynthesis; L-tryptophan from chorismate: step 1/5. Functionally, part of a heterotetrameric complex that catalyzes the two-step biosynthesis of anthranilate, an intermediate in the biosynthesis of L-tryptophan. In the first step, the glutamine-binding beta subunit (TrpG) of anthranilate synthase (AS) provides the glutamine amidotransferase activity which generates ammonia as a substrate that, along with chorismate, is used in the second step, catalyzed by the large alpha subunit of AS (TrpE) to produce anthranilate. In the absence of TrpG, TrpE can synthesize anthranilate directly from chorismate and high concentrations of ammonia. This Vibrio cholerae serotype O1 (strain ATCC 39315 / El Tor Inaba N16961) protein is Anthranilate synthase component 2 (trpG).